The sequence spans 525 residues: M-phase inducer phosphatase 1 (525 aa).

Positions 73–83 match the Phosphodegron motif; it reads MGSSESTDSGF. A Phosphoserine; by CHEK1 modification is found at serine 75. Phosphoserine; by NEK11 is present on residues serine 78, serine 81, and serine 87. Serine 106 is subject to Phosphoserine. Position 123 is a phosphoserine; by CHEK1 and CHEK2 (serine 123). The KEN box motif lies at 140–142; it reads KEN. A Phosphoserine; by CHEK1 modification is found at serine 177. 2 disordered regions span residues 179–204 and 262–308; these read PARM…PQSP and SASC…PEKP. Serine 279 and serine 293 each carry phosphoserine; by CHEK1 and CHEK2. The span at 294–306 shows a compositional bias: low complexity; it reads VAGASPEEAASPE. Residue serine 322 is modified to Phosphoserine. Residues 377–483 enclose the Rhodanese domain; that stretch reads LIKEFVIIDC…FFLKCQSHCE (107 aa). Residue cysteine 432 is part of the active site. Residue threonine 508 is modified to Phosphothreonine; by CHEK1. Serine 514 and serine 520 each carry phosphoserine; by PLK3.

Belongs to the MPI phosphatase family. In terms of assembly, interacts with CCNB1/cyclin B1. Interacts with YWHAE/14-3-3 epsilon when phosphorylated. Interacts with CUL1 specifically when CUL1 is neddylated and active. Interacts with BTRC/BTRCP1 and FBXW11/BTRCP2. Interactions with CUL1, BTRC and FBXW11 are enhanced upon DNA damage. Interacts with HSP90AB1; prevents heat shock-mediated CDC25A degradation and contributes to cell cycle progression. Phosphorylated by CHEK1 on Ser-75, Ser-123, Ser-177, Ser-279, Ser-293 and Thr-508 during checkpoint mediated cell cycle arrest. Also phosphorylated by CHEK2 on Ser-123, Ser-279, and Ser-293 during checkpoint mediated cell cycle arrest. Phosphorylation on Ser-177 and Thr-508 creates binding sites for YWHAE/14-3-3 epsilon which inhibits CDC25A. Phosphorylation on Ser-75, Ser-123, Ser-177, Ser-279 and Ser-293 may also promote ubiquitin-dependent proteolysis of CDC25A by the SCF complex. Phosphorylation of CDC25A at Ser-75 by CHEK1 primes it for subsequent phosphorylation at Ser-78, Ser-81 and Ser-87 by NEK11. Phosphorylation by NEK11 is required for BTRC-mediated polyubiquitination and degradation. Phosphorylation by PIM1 leads to an increase in phosphatase activity. Phosphorylated by PLK3 following DNA damage, leading to promote its ubiquitination and degradation. In terms of processing, ubiquitinated by the anaphase promoting complex/cyclosome (APC/C) ubiquitin ligase complex that contains FZR1/CDH1 during G1 phase leading to its degradation by the proteasome. Ubiquitinated by a SCF complex containing BTRC and FBXW11 during S phase leading to its degradation by the proteasome. Deubiquitination by USP17L2/DUB3 leads to its stabilization.

The catalysed reaction is O-phospho-L-tyrosyl-[protein] + H2O = L-tyrosyl-[protein] + phosphate. Stimulated by B-type cyclins. Stimulated by PIM1-mediated phosphorylation. Functionally, tyrosine protein phosphatase which functions as a dosage-dependent inducer of mitotic progression. Directly dephosphorylates CDK1 and stimulates its kinase activity. Also dephosphorylates CDK2 in complex with cyclin-E, in vitro. This chain is M-phase inducer phosphatase 1 (CDC25A), found in Bos taurus (Bovine).